We begin with the raw amino-acid sequence, 167 residues long: Signal peptidase complex subunit 3A (167 aa).

Over 1-11 the chain is Cytoplasmic; the sequence is MHTFGYRANAL. The helical; Signal-anchor for type II membrane protein transmembrane segment at 12-32 threads the bilayer; it reads LTFAVTALAFICAIASFSDKF. Residues 33-167 lie on the Lumenal side of the membrane; sequence SNQNPSAEIQ…PGYSLPDAYR (135 aa). Residue N136 is glycosylated (N-linked (GlcNAc...) asparagine).

It belongs to the SPCS3 family. Component of the signal peptidase complex (SPC) composed of a catalytic subunit SEC11 and three accessory subunits SPCS1, SPCS2 and SPCS3. The complex induces a local thinning of the ER membrane which is used to measure the length of the signal peptide (SP) h-region of protein substrates. This ensures the selectivity of the complex towards h-regions shorter than 18-20 amino acids.

The protein localises to the endoplasmic reticulum membrane. In terms of biological role, essential component of the signal peptidase complex (SPC) which catalyzes the cleavage of N-terminal signal sequences from nascent proteins as they are translocated into the lumen of the endoplasmic reticulum. Essential for the SPC catalytic activity, possibly by stabilizing and positioning the active center of the complex close to the lumenal surface. This is Signal peptidase complex subunit 3A from Arabidopsis thaliana (Mouse-ear cress).